A 150-amino-acid polypeptide reads, in one-letter code: Large ribosomal subunit protein bL9 (150 aa).

It belongs to the bacterial ribosomal protein bL9 family.

Functionally, binds to the 23S rRNA. This is Large ribosomal subunit protein bL9 from Streptococcus gordonii (strain Challis / ATCC 35105 / BCRC 15272 / CH1 / DL1 / V288).